We begin with the raw amino-acid sequence, 180 residues long: Oligoribonuclease (180 aa).

The 164-residue stretch at 7–170 folds into the Exonuclease domain; that stretch reads LIWIDLEMTG…DDIRESIAEL (164 aa). Tyrosine 128 is an active-site residue.

Belongs to the oligoribonuclease family.

Its subcellular location is the cytoplasm. 3'-to-5' exoribonuclease specific for small oligoribonucleotides. In Pseudomonas putida (strain ATCC 700007 / DSM 6899 / JCM 31910 / BCRC 17059 / LMG 24140 / F1), this protein is Oligoribonuclease.